Reading from the N-terminus, the 306-residue chain is Small ribosomal subunit protein uS2 (306 aa).

Positions 229–238 (GEESAAEERP) are enriched in basic and acidic residues. The tract at residues 229-306 (GEESAAEERP…VGEGDESEER (78 aa)) is disordered. Residues 261–287 (QPGEPEAEAFEEAAGEPEDSTEEEAAE) are compositionally biased toward acidic residues.

This sequence belongs to the universal ribosomal protein uS2 family.

In Rubrobacter xylanophilus (strain DSM 9941 / JCM 11954 / NBRC 16129 / PRD-1), this protein is Small ribosomal subunit protein uS2.